The primary structure comprises 1154 residues: Paired amphipathic helix protein pst3 (1154 aa).

Disordered stretches follow at residues 1–71 (MDVM…RSVT) and 91–110 (SGKD…SSSN). Basic and acidic residues predominate over residues 9-27 (DSERDNPGDKVETQSDKNH). Polar residues-rich tracts occupy residues 32–45 (SPSQ…TSLH) and 100–110 (QNAEGLSSSSN). The 71-residue stretch at 111–181 (RPLDVNDALS…EGFNTFLPSG (71 aa)) folds into the PAH 1 domain. Disordered regions lie at residues 199–249 (GTPM…STEN) and 321–376 (DNVD…KTSR). Over residues 228 to 241 (STSPTDSQPQPSAP) the composition is skewed to low complexity. The 71-residue stretch at 252–322 (PRVDFNYAIA…EEFKLFLPDN (71 aa)) folds into the PAH 2 domain. Composition is skewed to polar residues over residues 323–337 (VDST…QKSP) and 365–376 (AQISRSISKTSR). The region spanning 403–472 (SPYAATQEEL…LWFSEFIRWS (70 aa)) is the PAH 3 domain. Positions 797–824 (NSNNTNVSFQTDETQTEDETMSDIHPDD) are disordered.

It localises to the nucleus. The chain is Paired amphipathic helix protein pst3 (pst3) from Schizosaccharomyces pombe (strain 972 / ATCC 24843) (Fission yeast).